The following is a 76-amino-acid chain: Conotoxin MaIr332 (76 aa).

A signal peptide spans 1 to 21; it reads MKLTCVIVAVLFLTAWTFVTA. A propeptide spanning residues 22–48 is cleaved from the precursor; that stretch reads DDSGNGLENLFSKAHHEMKNPKDSKLN. Disulfide bonds link C51–C66, C58–C70, and C65–C75.

The protein belongs to the conotoxin O1 superfamily. In terms of tissue distribution, expressed by the venom duct.

The protein localises to the secreted. This is Conotoxin MaIr332 from Conus marmoreus (Marble cone).